A 314-amino-acid chain; its full sequence is Dihydropteroate synthase (314 aa).

A Pterin-binding domain is found at 10 to 294; sequence TVICGIINVT…DVASHRMAVE (285 aa). Asparagine 17 contributes to the Mg(2+) binding site. Residues aspartate 91, asparagine 110, aspartate 201, lysine 237, and 282–284 contribute to the (7,8-dihydropterin-6-yl)methyl diphosphate site; that span reads RVH.

It belongs to the DHPS family. As to quaternary structure, homodimer. It depends on Mg(2+) as a cofactor.

The enzyme catalyses (7,8-dihydropterin-6-yl)methyl diphosphate + 4-aminobenzoate = 7,8-dihydropteroate + diphosphate. Its pathway is cofactor biosynthesis; tetrahydrofolate biosynthesis; 7,8-dihydrofolate from 2-amino-4-hydroxy-6-hydroxymethyl-7,8-dihydropteridine diphosphate and 4-aminobenzoate: step 1/2. Is potently inhibited by sulfonamides, with Ki values between 25 nM and 850 nM. Catalyzes the condensation of para-aminobenzoate (pABA) with 6-hydroxymethyl-7,8-dihydropterin diphosphate (DHPt-PP) to form 7,8-dihydropteroate, the immediate precursor of folate derivatives. Its function is as follows. Is the target for the sulfonamide group of antimicrobial drugs. Sulfonamide drugs act as pABA analogs, they inhibit the reaction by acting as alternative substrates, leading to a 'dead end' sulfa-pterin product. The protein is Dihydropteroate synthase (sulA) of Streptococcus pneumoniae (strain ATCC BAA-255 / R6).